Consider the following 117-residue polypeptide: Immunoglobulin lambda variable 1-47 (117 aa).

The first 19 residues, 1–19 (MAGFPLLLTLLTHCAGSWA), serve as a signal peptide directing secretion. Glutamine 20 bears the Pyrrolidone carboxylic acid mark. A framework-1 region spans residues 20–44 (QSVLTQPPSASGTPGQRVTISCSGS). The Ig-like domain occupies 20–117 (QSVLTQPPSA…CAAWDDSLSG (98 aa)). Cysteines 41 and 108 form a disulfide. Residues 45-52 (SSNIGSNY) are complementarity-determining-1. The framework-2 stretch occupies residues 53-69 (VYWYQQLPGTAPKLLIY). The interval 70 to 72 (SNN) is complementarity-determining-2. The framework-3 stretch occupies residues 73 to 108 (QRPSGVPDRFSGSKSGTSASLAISGLRSEDEADYYC). The segment at 109–117 (AAWDDSLSG) is complementarity-determining-3.

In terms of assembly, immunoglobulins are composed of two identical heavy chains and two identical light chains; disulfide-linked.

It localises to the secreted. The protein localises to the cell membrane. Its function is as follows. V region of the variable domain of immunoglobulin light chains that participates in the antigen recognition. Immunoglobulins, also known as antibodies, are membrane-bound or secreted glycoproteins produced by B lymphocytes. In the recognition phase of humoral immunity, the membrane-bound immunoglobulins serve as receptors which, upon binding of a specific antigen, trigger the clonal expansion and differentiation of B lymphocytes into immunoglobulins-secreting plasma cells. Secreted immunoglobulins mediate the effector phase of humoral immunity, which results in the elimination of bound antigens. The antigen binding site is formed by the variable domain of one heavy chain, together with that of its associated light chain. Thus, each immunoglobulin has two antigen binding sites with remarkable affinity for a particular antigen. The variable domains are assembled by a process called V-(D)-J rearrangement and can then be subjected to somatic hypermutations which, after exposure to antigen and selection, allow affinity maturation for a particular antigen. The chain is Immunoglobulin lambda variable 1-47 from Homo sapiens (Human).